The sequence spans 554 residues: Condensin-2 complex subunit H2 (554 aa).

Phosphoserine is present on residues serine 45, serine 178, serine 182, serine 199, and serine 200. The segment at proline 154–threonine 296 is disordered. Residues arginine 179 to glutamine 191 are compositionally biased toward polar residues. A compositionally biased stretch (acidic residues) spans glycine 201–glutamate 210. At serine 441 the chain carries Phosphoserine.

The protein belongs to the CND2 H2 (condensin-2 subunit 2) family. Component of the condensin-2 complex, which contains the SMC2 and SMC4 heterodimer, and three non SMC subunits, NCAPG2, NCAPH2 and NCAPD3 that probably regulate the complex.

The protein localises to the nucleus. In terms of biological role, regulatory subunit of the condensin-2 complex, a complex that seems to provide chromosomes with an additional level of organization and rigidity and in establishing mitotic chromosome architecture. May promote the resolution of double-strand DNA catenanes (intertwines) between sister chromatids. Condensin-mediated compaction likely increases tension in catenated sister chromatids, providing directionality for type II topoisomerase-mediated strand exchanges toward chromatid decatenation. Required for decatenation of chromatin bridges at anaphase. Early in neurogenesis, may play an essential role to ensure accurate mitotic chromosome condensation in neuron stem cells, ultimately affecting neuron pool and cortex size. Seems to have lineage-specific role in T-cell development. The sequence is that of Condensin-2 complex subunit H2 (Ncaph2) from Rattus norvegicus (Rat).